Here is a 132-residue protein sequence, read N- to C-terminus: Small ribosomal subunit protein uS8c (132 aa).

The protein belongs to the universal ribosomal protein uS8 family. As to quaternary structure, part of the 30S ribosomal subunit.

The protein resides in the plastid. Its subcellular location is the chloroplast. Functionally, one of the primary rRNA binding proteins, it binds directly to 16S rRNA central domain where it helps coordinate assembly of the platform of the 30S subunit. This is Small ribosomal subunit protein uS8c (rps8) from Guillardia theta (Cryptophyte).